The following is a 21-amino-acid chain: Hemolymph 65 kDa lectin BG04 (21 aa).

As to expression, hemolymph.

Its subcellular location is the secreted. Binds and precipitates antigens of the parasite Echinostoma paraensei. This chain is Hemolymph 65 kDa lectin BG04 (BG04), found in Biomphalaria glabrata (Bloodfluke planorb).